Here is a 508-residue protein sequence, read N- to C-terminus: Aspartic proteinase yapsin-3 (508 aa).

The N-terminal stretch at Met1–Gly20 is a signal peptide. A propeptide spanning residues Arg21–Arg47 is cleaved from the precursor. The 332-residue stretch at Tyr63–Ala394 folds into the Peptidase A1 domain. Asn75 is a glycosylation site (N-linked (GlcNAc...) asparagine). Asp81 is a catalytic residue. 4 N-linked (GlcNAc...) asparagine glycosylation sites follow: Asn120, Asn160, Asn163, and Asn275. Asp288 is a catalytic residue. Asn309, Asn328, Asn367, Asn422, Asn445, and Asn462 each carry an N-linked (GlcNAc...) asparagine glycan. Residues Ser448–Lys468 show a composition bias toward low complexity. The interval Ser448–Ala476 is disordered. Residue Asn483 is the site of GPI-anchor amidated asparagine attachment. Positions Ser484–Ser508 are cleaved as a propeptide — removed in mature form.

It belongs to the peptidase A1 family. Post-translationally, can also be processed to start at Phe-54.

The protein localises to the cell membrane. In terms of biological role, cleaves proteins C-terminally to mono- and paired-basic residues. Required for cell wall integrity. This Saccharomyces cerevisiae (strain ATCC 204508 / S288c) (Baker's yeast) protein is Aspartic proteinase yapsin-3 (YPS3).